A 385-amino-acid polypeptide reads, in one-letter code: 1-deoxy-D-xylulose 5-phosphate reductoisomerase (385 aa).

Residues T10, G11, S12, I13, K37, and N124 each coordinate NADPH. 1-deoxy-D-xylulose 5-phosphate is bound at residue K125. Residue E126 participates in NADPH binding. D150 contributes to the Mn(2+) binding site. 1-deoxy-D-xylulose 5-phosphate contacts are provided by S151, E152, S176, and H199. E152 is a Mn(2+) binding site. NADPH is bound at residue G205. 1-deoxy-D-xylulose 5-phosphate contacts are provided by S212, N217, K218, and E221. Mn(2+) is bound at residue E221.

Belongs to the DXR family. Requires Mg(2+) as cofactor. It depends on Mn(2+) as a cofactor.

It carries out the reaction 2-C-methyl-D-erythritol 4-phosphate + NADP(+) = 1-deoxy-D-xylulose 5-phosphate + NADPH + H(+). The protein operates within isoprenoid biosynthesis; isopentenyl diphosphate biosynthesis via DXP pathway; isopentenyl diphosphate from 1-deoxy-D-xylulose 5-phosphate: step 1/6. In terms of biological role, catalyzes the NADPH-dependent rearrangement and reduction of 1-deoxy-D-xylulose-5-phosphate (DXP) to 2-C-methyl-D-erythritol 4-phosphate (MEP). The polypeptide is 1-deoxy-D-xylulose 5-phosphate reductoisomerase (Clostridium botulinum (strain ATCC 19397 / Type A)).